The chain runs to 226 residues: Reticulon-like protein B16 (226 aa).

A Reticulon domain is found at 41 to 224 (AADLLLWRRR…RLSWSLSKDK (184 aa)). A run of 3 helical transmembrane segments spans residues 54-74 (LGVI…GLPF), 75-95 (LSVS…HARV), and 149-169 (VVIC…CTLL).

The protein localises to the endoplasmic reticulum membrane. This chain is Reticulon-like protein B16 (RTNLB16), found in Arabidopsis thaliana (Mouse-ear cress).